We begin with the raw amino-acid sequence, 211 residues long: Receptor expression-enhancing protein 6 (211 aa).

The next 2 membrane-spanning stretches (helical) occupy residues 44 to 64 (LSLY…IGFV) and 89 to 109 (WVVY…LSWF). Residues 190–211 (AGPSTPLEADLKPSQTPQPKDK) form a disordered region. Polar residues predominate over residues 202–211 (PSQTPQPKDK).

It belongs to the DP1 family. As to quaternary structure, interacts with STX3. Interacts with clathrin. In terms of tissue distribution, expressed in circumvallate papillae and testis. Expressed in the retina. Isoform 1 is predominantly present in mature optic cups. Isoform 1 expression is confined to the cell body and inner segment of developing rod photoreceptor cells.

The protein localises to the endoplasmic reticulum membrane. The protein resides in the cytoplasmic vesicle. Its subcellular location is the clathrin-coated vesicle membrane. Required for correct function and survival of retinal photoreceptors. Required for retinal development. In rod photoreceptors, facilitates stability and/or trafficking of guanylate cyclases and is required to maintain endoplasmic reticulum and mitochondrial homeostasis. May play a role in clathrin-coated intracellular vesicle trafficking of proteins from the endoplasmic reticulum to the retinal rod plasma membrane. In Homo sapiens (Human), this protein is Receptor expression-enhancing protein 6 (REEP6).